Reading from the N-terminus, the 288-residue chain is MNEQWLEHLPLKDIKEISPVSGGDVNEAYRVETDTDTFFLLVQRGRKESFYAAEIAGLNEFERAGITAPRVIASGEVNGDAYLVMTYLEEGASGSQRQLGQLVAQLHSQQQEEGKFGFSLPYEGGDISFDNHWQDDWCTIFVDKRLDHLKDELLNRGLWDANDIKVYDKVRRQIVAELEKHQSKPSLLHGDLWGGNYMFLQDGRPALFDPAPLYGDREFDIGITTVFGGFTSEFYDAYNKHYPLAKGASYRLEFYRLYLLMVHLLKFGEMYRDSVAHSMDKILQDTTS.

Residue 86–88 (TYL) participates in ATP binding. Aspartate 191 serves as the catalytic Proton acceptor.

Belongs to the fructosamine kinase family.

The catalysed reaction is N(6)-(D-ribulosyl)-L-lysine + ATP = N(6)-(3-O-phospho-D-ribulosyl)-L-lysine + ADP + H(+). It carries out the reaction N(6)-(D-erythrulosyl)-L-lysine + ATP = N(6)-(3-O-phospho-D-erythrulosyl)-L-lysine + ADP + H(+). The enzyme catalyses N(6)-D-ribulosyl-L-lysyl-[protein] + ATP = N(6)-(3-O-phospho-D-ribulosyl)-L-lysyl-[protein] + ADP + H(+). It catalyses the reaction N(6)-(D-erythrulosyl)-L-lysyl-[protein] + ATP = N(6)-(3-O-phospho-D-erythrulosyl)-L-lysyl-[protein] + ADP + H(+). Functionally, ketoamine kinase that phosphorylates ketoamines, such as erythruloselysine and ribuloselysine, on the third carbon of the sugar moiety to generate ketoamine 3-phosphate. Has higher activity on free lysine (erythruloselysine and ribuloselysine), than on ribuloselysine and erythruloselysine residues on glycated proteins. The polypeptide is Probable ketoamine kinase SAOUHSC_02908 (Staphylococcus aureus (strain NCTC 8325 / PS 47)).